The following is a 194-amino-acid chain: FMN-dependent NADH:quinone oxidoreductase (194 aa).

FMN-binding positions include serine 10 and 90–93; that span reads MYNL.

This sequence belongs to the azoreductase type 1 family. As to quaternary structure, homodimer. FMN serves as cofactor.

It carries out the reaction 2 a quinone + NADH + H(+) = 2 a 1,4-benzosemiquinone + NAD(+). The enzyme catalyses N,N-dimethyl-1,4-phenylenediamine + anthranilate + 2 NAD(+) = 2-(4-dimethylaminophenyl)diazenylbenzoate + 2 NADH + 2 H(+). In terms of biological role, quinone reductase that provides resistance to thiol-specific stress caused by electrophilic quinones. Also exhibits azoreductase activity. Catalyzes the reductive cleavage of the azo bond in aromatic azo compounds to the corresponding amines. The chain is FMN-dependent NADH:quinone oxidoreductase from Haemophilus influenzae (strain ATCC 51907 / DSM 11121 / KW20 / Rd).